Consider the following 78-residue polypeptide: Small ribosomal subunit protein bS18 (78 aa).

It belongs to the bacterial ribosomal protein bS18 family. As to quaternary structure, part of the 30S ribosomal subunit. Forms a tight heterodimer with protein bS6.

Binds as a heterodimer with protein bS6 to the central domain of the 16S rRNA, where it helps stabilize the platform of the 30S subunit. This is Small ribosomal subunit protein bS18 from Kineococcus radiotolerans (strain ATCC BAA-149 / DSM 14245 / SRS30216).